The sequence spans 345 residues: Uroporphyrinogen decarboxylase (345 aa).

Substrate is bound by residues 27–31 (RQAGR), phenylalanine 46, aspartate 76, tyrosine 152, serine 207, and histidine 320.

It belongs to the uroporphyrinogen decarboxylase family. As to quaternary structure, homodimer.

It is found in the cytoplasm. It catalyses the reaction uroporphyrinogen III + 4 H(+) = coproporphyrinogen III + 4 CO2. The protein operates within porphyrin-containing compound metabolism; protoporphyrin-IX biosynthesis; coproporphyrinogen-III from 5-aminolevulinate: step 4/4. Catalyzes the decarboxylation of four acetate groups of uroporphyrinogen-III to yield coproporphyrinogen-III. In Geobacillus sp. (strain WCH70), this protein is Uroporphyrinogen decarboxylase.